A 494-amino-acid polypeptide reads, in one-letter code: Endoglucanase 22 (494 aa).

The N-terminal stretch at 1 to 21 (MKPLVCSFIVILLILLPTTIS) is a signal peptide. Catalysis depends on Asp-76, which acts as the Nucleophile. The active site involves His-413. Asn-468 is a glycosylation site (N-linked (GlcNAc...) asparagine). Residue Glu-473 is part of the active site.

The protein belongs to the glycosyl hydrolase 9 (cellulase E) family.

The protein localises to the secreted. It carries out the reaction Endohydrolysis of (1-&gt;4)-beta-D-glucosidic linkages in cellulose, lichenin and cereal beta-D-glucans.. This Arabidopsis thaliana (Mouse-ear cress) protein is Endoglucanase 22 (GH9B16).